Consider the following 535-residue polypeptide: tRNA-2-methylthio-N(6)-dimethylallyladenosine synthase (535 aa).

The MTTase N-terminal domain occupies 24 to 139; it reads RTYEVRTFGC…LPRLLERARH (116 aa). [4Fe-4S] cluster-binding residues include Cys33, Cys68, Cys102, Cys176, Cys180, and Cys183. Residues 162–392 form the Radical SAM core domain; that stretch reads RDSSFSGWVS…IALQERISLE (231 aa). The region spanning 395-465 is the TRAM domain; the sequence is EKLIGRDVEL…PHYLIADAAG (71 aa). Residues 512–535 are disordered; the sequence is RTREPLTSPGVGTMPLYDPTDGQR.

Belongs to the methylthiotransferase family. MiaB subfamily. As to quaternary structure, monomer. [4Fe-4S] cluster is required as a cofactor.

The protein resides in the cytoplasm. It catalyses the reaction N(6)-dimethylallyladenosine(37) in tRNA + (sulfur carrier)-SH + AH2 + 2 S-adenosyl-L-methionine = 2-methylsulfanyl-N(6)-dimethylallyladenosine(37) in tRNA + (sulfur carrier)-H + 5'-deoxyadenosine + L-methionine + A + S-adenosyl-L-homocysteine + 2 H(+). In terms of biological role, catalyzes the methylthiolation of N6-(dimethylallyl)adenosine (i(6)A), leading to the formation of 2-methylthio-N6-(dimethylallyl)adenosine (ms(2)i(6)A) at position 37 in tRNAs that read codons beginning with uridine. This chain is tRNA-2-methylthio-N(6)-dimethylallyladenosine synthase, found in Leifsonia xyli subsp. xyli (strain CTCB07).